The chain runs to 597 residues: Aspartate--tRNA(Asp/Asn) ligase (597 aa).

E175 contacts L-aspartate. Residues Q199–K202 are aspartate. Positions 221 and 456 each coordinate L-aspartate. R221–E223 serves as a coordination point for ATP. An ATP-binding site is contributed by E490. R497 contacts L-aspartate. G542 to R545 is a binding site for ATP.

The protein belongs to the class-II aminoacyl-tRNA synthetase family. Type 1 subfamily. As to quaternary structure, homodimer.

It localises to the cytoplasm. It carries out the reaction tRNA(Asx) + L-aspartate + ATP = L-aspartyl-tRNA(Asx) + AMP + diphosphate. In terms of biological role, aspartyl-tRNA synthetase with relaxed tRNA specificity since it is able to aspartylate not only its cognate tRNA(Asp) but also tRNA(Asn). Reaction proceeds in two steps: L-aspartate is first activated by ATP to form Asp-AMP and then transferred to the acceptor end of tRNA(Asp/Asn). This Beijerinckia indica subsp. indica (strain ATCC 9039 / DSM 1715 / NCIMB 8712) protein is Aspartate--tRNA(Asp/Asn) ligase.